The following is a 508-amino-acid chain: Histone acetyltransferase type B catalytic subunit (508 aa).

2 interaction with histone H4 N-terminus regions span residues 44-46 (EKE) and 207-209 (YRY). Residues 249 to 251 (FII) and 256 to 262 (QQKGLGS) contribute to the acetyl-CoA site. The Proton donor/acceptor role is filled by Glu-284. Disordered stretches follow at residues 364–399 (SVRP…PTPE) and 461–508 (QADG…SGHA). Residues 387–399 (KGHEKALPKPTPE) show a composition bias toward basic and acidic residues.

Belongs to the HAT1 family. In terms of assembly, component of the HAT-B complex composed of at least hat-1 and hat-2. The HAT-B complex binds to histone H4 tail.

The protein resides in the cytoplasm. The protein localises to the nucleus. The enzyme catalyses L-lysyl-[protein] + acetyl-CoA = N(6)-acetyl-L-lysyl-[protein] + CoA + H(+). Its function is as follows. Catalytic component of the histone acetylase B (HAT-B) complex. Acetylates 'Lys-12' of histone H4 which is required for telomeric silencing. Has intrinsic substrate specificity that modifies lysine in recognition sequence GXGKXG. Involved in DNA double-strand break repair. The polypeptide is Histone acetyltransferase type B catalytic subunit (hat-1) (Neurospora crassa (strain ATCC 24698 / 74-OR23-1A / CBS 708.71 / DSM 1257 / FGSC 987)).